The chain runs to 53 residues: Light-harvesting protein B-800/850 alpha chain (53 aa).

The Cytoplasmic segment spans residues 1 to 14; that stretch reads MNQGKIWTVVNPSV. The chain crosses the membrane as a helical span at residues 15 to 35; that stretch reads GLPLLLGSVTVIAILVHAAVL. H31 provides a ligand contact to a bacteriochlorophyll. The Periplasmic segment spans residues 36–53; that stretch reads SHTTWFPAYWQGGLKKAA.

The protein belongs to the antenna complex alpha subunit family. In terms of assembly, the core complex is formed by different alpha and beta chains, binding bacteriochlorophyll molecules, and arranged most probably in tetrameric structures disposed around the reaction center. The non-pigmented gamma chains may constitute additional components.

The protein localises to the cell inner membrane. In terms of biological role, antenna complexes are light-harvesting systems, which transfer the excitation energy to the reaction centers. The sequence is that of Light-harvesting protein B-800/850 alpha chain from Rhodoblastus acidophilus (Rhodopseudomonas acidophila).